A 274-amino-acid polypeptide reads, in one-letter code: Large ribosomal subunit protein uL2 (274 aa).

Residues 221 to 254 (RGTAMNPADHPHGGGEGRTFGKHPVSPWGLPTKG) are disordered.

This sequence belongs to the universal ribosomal protein uL2 family. Part of the 50S ribosomal subunit. Forms a bridge to the 30S subunit in the 70S ribosome.

Its function is as follows. One of the primary rRNA binding proteins. Required for association of the 30S and 50S subunits to form the 70S ribosome, for tRNA binding and peptide bond formation. It has been suggested to have peptidyltransferase activity; this is somewhat controversial. Makes several contacts with the 16S rRNA in the 70S ribosome. In Sulfurihydrogenibium sp. (strain YO3AOP1), this protein is Large ribosomal subunit protein uL2.